The primary structure comprises 408 residues: Heparan-sulfate 6-O-sulfotransferase 1 (408 aa).

Residues 8 to 14 (MVERTSK) are Cytoplasmic-facing. Residues 15–35 (FLLIVAASVCFMLILYQYVGP) form a helical; Signal-anchor for type II membrane protein membrane-spanning segment. Residues 36–408 (GLSLGAPSGR…DYMSHIIEKW (373 aa)) lie on the Lumenal side of the membrane. Residue 90-98 (HIQKTGGTT) participates in 3'-phosphoadenylyl sulfate binding. Residues 120 to 121 (KK), Arg137, Trp142, and His147 contribute to the substrate site. The active-site Proton acceptor is the His147. Residues Arg182 and Ser190 each contribute to the 3'-phosphoadenylyl sulfate site. Positions 194 and 201 each coordinate substrate. Asn261 carries an N-linked (GlcNAc...) asparagine glycan. Residue 314-316 (MQY) participates in 3'-phosphoadenylyl sulfate binding. Asn317 carries N-linked (GlcNAc...) asparagine glycosylation. 320 to 321 (RA) provides a ligand contact to 3'-phosphoadenylyl sulfate. N-linked (GlcNAc...) asparagine glycosylation occurs at Asn328. Residues 348-382 (AKDLFQQRYQYKRQLERMEQRIKNREERLLHRSNE) adopt a coiled-coil conformation. Residues 376 to 396 (LLHRSNEALPKEETEEQGRLP) are disordered.

This sequence belongs to the sulfotransferase 6 family. In terms of processing, N-glycosylated.

The protein localises to the membrane. The catalysed reaction is alpha-D-glucosaminyl-[heparan sulfate](n) + 3'-phosphoadenylyl sulfate = 6-sulfo-alpha-D-glucosaminyl-[heparan sulfate](n) + adenosine 3',5'-bisphosphate + H(+). Its function is as follows. 6-O-sulfation enzyme which catalyzes the transfer of sulfate from 3'-phosphoadenosine 5'-phosphosulfate (PAPS) to position 6 of the N-sulfoglucosamine residue (GlcNS) of heparan sulfate. May also play a role in limb development. This chain is Heparan-sulfate 6-O-sulfotransferase 1, found in Gallus gallus (Chicken).